A 733-amino-acid polypeptide reads, in one-letter code: Alpha,alpha-trehalose-phosphate synthase [UDP-forming] A (733 aa).

This sequence in the N-terminal section; belongs to the glycosyltransferase 20 family. It in the C-terminal section; belongs to the trehalose phosphatase family.

The enzyme catalyses D-glucose 6-phosphate + UDP-alpha-D-glucose = alpha,alpha-trehalose 6-phosphate + UDP + H(+). Functionally, synthesizes trehalose 6-phosphate, the precursor for the production of trehalose, the main carbohydrate storage reserve of the dormant spore. Trehalose accumulates in both prestalk and prespore cells and then is rapidly metabolized during terminal differentiation of stalk cells, while being stored in spores, where it serves as the principal energy and carbon source for germination. The chain is Alpha,alpha-trehalose-phosphate synthase [UDP-forming] A (tpsA) from Dictyostelium discoideum (Social amoeba).